The sequence spans 396 residues: Ribose-phosphate pyrophosphokinase 1, chloroplastic (396 aa).

Residues 1–36 (MPLSYSAAAAAAPSPLAARSRGLLRRPPRSSPVVVR) constitute a chloroplast transit peptide. D204, H206, D215, and D219 together coordinate Mg(2+). A binding of phosphoribosylpyrophosphate region spans residues 290-305 (GKVAVMMDDMIDTAGT).

This sequence belongs to the ribose-phosphate pyrophosphokinase family. The cofactor is Mg(2+).

It is found in the plastid. The protein resides in the chloroplast. It carries out the reaction D-ribose 5-phosphate + ATP = 5-phospho-alpha-D-ribose 1-diphosphate + AMP + H(+). The protein is Ribose-phosphate pyrophosphokinase 1, chloroplastic of Oryza sativa subsp. japonica (Rice).